Here is a 103-residue protein sequence, read N- to C-terminus: MEACSRKRRRRRAYTTSTTGYAAVFFCGIFVFAQFGISSSALFAPDHYPSLPRKAGHFHEMASFQAPKATVSFTGQRREEENRDEVYKDDKRLVHTGPNPLHN.

Positions 1–21 (MEACSRKRRRRRAYTTSTTGY) are cleaved as a signal peptide. The tract at residues 71-103 (VSFTGQRREEENRDEVYKDDKRLVHTGPNPLHN) is disordered. Over residues 76-93 (QRREEENRDEVYKDDKRL) the composition is skewed to basic and acidic residues. Proline 98 is modified (hydroxyproline). A glycan (O-linked (Ara...) hydroxyproline) is linked at proline 98.

The protein belongs to the CLV3/ESR signal peptide family. The O-glycosylation (arabinosylation) of the hydroxyproline Pro-98 enhances binding affinity of the CLE16p peptide for its receptor. In terms of tissue distribution, expressed in roots, stems, apex, seedlings, leaves, flowers and siliques.

It localises to the secreted. The protein localises to the extracellular space. Extracellular signal peptide that regulates cell fate. Represses root apical meristem maintenance. Regulates the transition of protophloem cells from proliferation to differentiation, thus impinging on postembryonic growth capacity of the root meristem; this signaling pathway requires CRN and CLV2. The chain is CLAVATA3/ESR (CLE)-related protein 16 from Arabidopsis thaliana (Mouse-ear cress).